Reading from the N-terminus, the 66-residue chain is Beta-defensin 107A (66 aa).

The first 22 residues, 1–22 (MKIFFFIFAALILLAQIFQART), serve as a signal peptide directing secretion. 2 cysteine pairs are disulfide-bonded: Cys37–Cys51 and Cys41–Cys60.

It belongs to the beta-defensin family.

It localises to the secreted. Functionally, has antibacterial activity. The sequence is that of Beta-defensin 107A (DEFB107A) from Hylobates lar (Lar gibbon).